The sequence spans 544 residues: Methionine--tRNA ligase 2 (544 aa).

The 'HIGH' region motif lies at 10-20 (PYANGSLHLGH). The Zn(2+) site is built by C141, C144, C153, and C156. The 'KMSKS' region signature appears at 329 to 333 (KLSTS). An ATP-binding site is contributed by T332.

It belongs to the class-I aminoacyl-tRNA synthetase family. MetG type 1 subfamily. In terms of assembly, monomer. It depends on Zn(2+) as a cofactor.

The protein resides in the cytoplasm. The enzyme catalyses tRNA(Met) + L-methionine + ATP = L-methionyl-tRNA(Met) + AMP + diphosphate. Its function is as follows. Is required not only for elongation of protein synthesis but also for the initiation of all mRNA translation through initiator tRNA(fMet) aminoacylation. The protein is Methionine--tRNA ligase 2 of Bacillus cereus (strain ATCC 14579 / DSM 31 / CCUG 7414 / JCM 2152 / NBRC 15305 / NCIMB 9373 / NCTC 2599 / NRRL B-3711).